The chain runs to 282 residues: Deoxyribonuclease-1 (282 aa).

The signal sequence occupies residues M1 to S22. N40 carries N-linked (GlcNAc...) asparagine glycosylation. E100 is a catalytic residue. A disulfide bridge connects residues C123 and C126. The N-linked (GlcNAc...) asparagine glycan is linked to N128. Residue H156 is part of the active site. C195 and C231 are oxidised to a cystine.

Belongs to the DNase I family. Requires Ca(2+) as cofactor. The cofactor is Mg(2+).

The protein localises to the secreted. It is found in the zymogen granule. It localises to the nucleus envelope. It carries out the reaction Endonucleolytic cleavage to 5'-phosphodinucleotide and 5'-phosphooligonucleotide end-products.. Functionally, serum endocuclease secreted into body fluids by a wide variety of exocrine and endocrine organs. Expressed by non-hematopoietic tissues and preferentially cleaves protein-free DNA. Among other functions, seems to be involved in cell death by apoptosis. Binds specifically to G-actin and blocks actin polymerization. Together with DNASE1L3, plays a key role in degrading neutrophil extracellular traps (NETs). NETs are mainly composed of DNA fibers and are released by neutrophils to bind pathogens during inflammation. Degradation of intravascular NETs by DNASE1 and DNASE1L3 is required to prevent formation of clots that obstruct blood vessels and cause organ damage following inflammation. The protein is Deoxyribonuclease-1 (DNASE1) of Equus caballus (Horse).